A 364-amino-acid polypeptide reads, in one-letter code: Protein IncC (364 aa).

Composition is skewed to basic and acidic residues over residues 1–10, 26–42, and 89–100; these read MGVIHEETAY, ADHR…EATG, and HRPEVGSGRQEK. 2 disordered regions span residues 1 to 63 and 75 to 102; these read MGVI…ASRV and VRAG…EKTG.

The protein belongs to the ParA family.

Functionally, this is one of the proteins encoded by the trfB operon; it is involved in plasmid maintenance and replication. The polypeptide is Protein IncC (incC) (Escherichia coli).